Reading from the N-terminus, the 566-residue chain is Putative lipase ATG15 (566 aa).

The Cytoplasmic segment spans residues 1 to 17; it reads MGSKHKKNASKSLRAFS. Residues 18 to 38 traverse the membrane as a helical; Signal-anchor for type II membrane protein segment; the sequence is FIILSASIALVYIFNPVKLIF. The Lumenal segment spans residues 39–566; the sequence is PSSIIRFHHG…CVEWGDEEDA (528 aa). Asparagine 264 and asparagine 348 each carry an N-linked (GlcNAc...) asparagine glycan. Serine 366 (charge relay system) is an active-site residue. An N-linked (GlcNAc...) asparagine glycan is attached at asparagine 483. The segment at 507 to 545 is disordered; that stretch reads DSLDDEPPLPNPLRPGKPSTTSSSQHHTSTTTTTETSRP. The span at 522–543 shows a compositional bias: low complexity; the sequence is GKPSTTSSSQHHTSTTTTTETS.

The protein belongs to the AB hydrolase superfamily. Lipase family. As to quaternary structure, binds to both phosphatidylinositol (PI) and phosphatidylinositol 3,5-bisphosphate (PIP2).

The protein resides in the endosome. The protein localises to the multivesicular body membrane. It is found in the prevacuolar compartment membrane. The catalysed reaction is a triacylglycerol + H2O = a diacylglycerol + a fatty acid + H(+). In terms of biological role, lipase which is essential for lysis of subvacuolar cytoplasm to vacuole targeted bodies and intravacuolar autophagic bodies. Involved in the lysis of intravacuolar multivesicular body (MVB) vesicles. The intravacuolar membrane disintegration by ATG15 is critical to life span extension. This chain is Putative lipase ATG15 (ATG15), found in Meyerozyma guilliermondii (strain ATCC 6260 / CBS 566 / DSM 6381 / JCM 1539 / NBRC 10279 / NRRL Y-324) (Yeast).